The sequence spans 1293 residues: Phosphoribosylformylglycinamidine synthase (1293 aa).

Residues glycine 305–aspartate 316 and alanine 676 each bind ATP. Positions glycine 305–alanine 328 are disordered. Residues aspartate 677, glutamate 716, asparagine 720, and aspartate 884 each coordinate Mg(2+). ATP is bound at residue serine 886. The region spanning methionine 1040–glycine 1293 is the Glutamine amidotransferase type-1 domain. Cysteine 1133 serves as the catalytic Nucleophile. Residues histidine 1258 and glutamate 1260 contribute to the active site.

It in the N-terminal section; belongs to the FGAMS family. Monomer.

Its subcellular location is the cytoplasm. It catalyses the reaction N(2)-formyl-N(1)-(5-phospho-beta-D-ribosyl)glycinamide + L-glutamine + ATP + H2O = 2-formamido-N(1)-(5-O-phospho-beta-D-ribosyl)acetamidine + L-glutamate + ADP + phosphate + H(+). It participates in purine metabolism; IMP biosynthesis via de novo pathway; 5-amino-1-(5-phospho-D-ribosyl)imidazole from N(2)-formyl-N(1)-(5-phospho-D-ribosyl)glycinamide: step 1/2. Its function is as follows. Phosphoribosylformylglycinamidine synthase involved in the purines biosynthetic pathway. Catalyzes the ATP-dependent conversion of formylglycinamide ribonucleotide (FGAR) and glutamine to yield formylglycinamidine ribonucleotide (FGAM) and glutamate. This Shewanella sp. (strain MR-7) protein is Phosphoribosylformylglycinamidine synthase.